A 188-amino-acid polypeptide reads, in one-letter code: Apolipoprotein M (188 aa).

Residues 1–22 (MFHQIWAALLYFYGIILNSIYQ) constitute a signal peptide (not cleaved). Intrachain disulfides connect Cys23–Cys167, Cys95–Cys183, and Cys128–Cys157. N-linked (GlcNAc...) asparagine glycosylation occurs at Asn135. Glu136 and Arg143 together coordinate tetradecanoate.

Belongs to the calycin superfamily. Lipocalin family. Highly divergent. As to quaternary structure, interacts with LRP2; LRP2 mediates APOM renal uptake and subsequent lysosomal degradation.

The protein resides in the secreted. Its function is as follows. Probably involved in lipid transport. Can bind sphingosine-1-phosphate, myristic acid, palmitic acid and stearic acid, retinol, all-trans-retinoic acid and 9-cis-retinoic acid. The protein is Apolipoprotein M (APOM) of Pongo abelii (Sumatran orangutan).